The following is a 333-amino-acid chain: Holliday junction branch migration complex subunit RuvB (333 aa).

The large ATPase domain (RuvB-L) stretch occupies residues 1–182 (MDERLLSGES…FGVLSRLEYY (182 aa)). ATP contacts are provided by residues Leu21, Arg22, Gly63, Lys66, Thr67, Thr68, 129-131 (EDF), Arg172, Tyr182, and Arg219. Thr67 lines the Mg(2+) pocket. The tract at residues 183–253 (TVDQLSAIVE…ITQMALELLQ (71 aa)) is small ATPAse domain (RuvB-S). The interval 256 to 333 (KLGLDHIDHK…EHFGMEMPKV (78 aa)) is head domain (RuvB-H). Positions 311 and 316 each coordinate DNA.

The protein belongs to the RuvB family. In terms of assembly, homohexamer. Forms an RuvA(8)-RuvB(12)-Holliday junction (HJ) complex. HJ DNA is sandwiched between 2 RuvA tetramers; dsDNA enters through RuvA and exits via RuvB. An RuvB hexamer assembles on each DNA strand where it exits the tetramer. Each RuvB hexamer is contacted by two RuvA subunits (via domain III) on 2 adjacent RuvB subunits; this complex drives branch migration. In the full resolvosome a probable DNA-RuvA(4)-RuvB(12)-RuvC(2) complex forms which resolves the HJ.

The protein localises to the cytoplasm. It catalyses the reaction ATP + H2O = ADP + phosphate + H(+). Functionally, the RuvA-RuvB-RuvC complex processes Holliday junction (HJ) DNA during genetic recombination and DNA repair, while the RuvA-RuvB complex plays an important role in the rescue of blocked DNA replication forks via replication fork reversal (RFR). RuvA specifically binds to HJ cruciform DNA, conferring on it an open structure. The RuvB hexamer acts as an ATP-dependent pump, pulling dsDNA into and through the RuvAB complex. RuvB forms 2 homohexamers on either side of HJ DNA bound by 1 or 2 RuvA tetramers; 4 subunits per hexamer contact DNA at a time. Coordinated motions by a converter formed by DNA-disengaged RuvB subunits stimulates ATP hydrolysis and nucleotide exchange. Immobilization of the converter enables RuvB to convert the ATP-contained energy into a lever motion, pulling 2 nucleotides of DNA out of the RuvA tetramer per ATP hydrolyzed, thus driving DNA branch migration. The RuvB motors rotate together with the DNA substrate, which together with the progressing nucleotide cycle form the mechanistic basis for DNA recombination by continuous HJ branch migration. Branch migration allows RuvC to scan DNA until it finds its consensus sequence, where it cleaves and resolves cruciform DNA. This chain is Holliday junction branch migration complex subunit RuvB, found in Bacillus cereus (strain Q1).